Consider the following 298-residue polypeptide: Ribosomal RNA small subunit methyltransferase H (298 aa).

Residues 38–40, aspartate 57, phenylalanine 84, aspartate 100, and glutamine 107 contribute to the S-adenosyl-L-methionine site; that span reads GGH.

The protein belongs to the methyltransferase superfamily. RsmH family.

The protein localises to the cytoplasm. It carries out the reaction cytidine(1402) in 16S rRNA + S-adenosyl-L-methionine = N(4)-methylcytidine(1402) in 16S rRNA + S-adenosyl-L-homocysteine + H(+). In terms of biological role, specifically methylates the N4 position of cytidine in position 1402 (C1402) of 16S rRNA. This chain is Ribosomal RNA small subunit methyltransferase H, found in Acaryochloris marina (strain MBIC 11017).